Consider the following 152-residue polypeptide: Large ribosomal subunit protein bL9 (152 aa).

Belongs to the bacterial ribosomal protein bL9 family.

In terms of biological role, binds to the 23S rRNA. This chain is Large ribosomal subunit protein bL9, found in Rippkaea orientalis (strain PCC 8801 / RF-1) (Cyanothece sp. (strain PCC 8801)).